The following is a 64-amino-acid chain: Disintegrin (64 aa).

Residues 1 to 64 (NSVHPCCDPV…SDCPRNRYNH (64 aa)) form the Disintegrin domain. Disulfide bonds link cysteine 6–cysteine 29, cysteine 20–cysteine 26, cysteine 25–cysteine 50, and cysteine 38–cysteine 57. The Cell attachment site; atypical (MLD) signature appears at 42–44 (MLD).

This sequence belongs to the disintegrin family. Dimeric disintegrin subfamily. In terms of assembly, heterodimer; disulfide-linked. In terms of tissue distribution, expressed by the venom gland.

It localises to the secreted. Its function is as follows. Inhibits adhesion of cells expressing alpha-4/beta-1 (ITGA4/ITGB1) and alpha-4/beta-7 (ITGA4/ITGB7) integrins to the natural ligands vascular cell adhesion molecule 1 (VCAM-1) and mucosal addressin cell adhesion molecule 1 (MADCAM-1). The polypeptide is Disintegrin (Echis carinatus (Saw-scaled viper)).